The sequence spans 126 residues: Large ribosomal subunit protein bL17 (126 aa).

Belongs to the bacterial ribosomal protein bL17 family. In terms of assembly, part of the 50S ribosomal subunit. Contacts protein L32.

This Xylella fastidiosa (strain 9a5c) protein is Large ribosomal subunit protein bL17.